The sequence spans 188 residues: Pyridoxal 5'-phosphate synthase subunit PdxT (188 aa).

Residue Gly-46–Ser-48 coordinates L-glutamine. Cys-78 functions as the Nucleophile in the catalytic mechanism. L-glutamine contacts are provided by residues Arg-105 and Ile-134–Arg-135. Residues His-170 and Glu-172 each act as charge relay system in the active site.

The protein belongs to the glutaminase PdxT/SNO family. In the presence of PdxS, forms a dodecamer of heterodimers. Only shows activity in the heterodimer.

It catalyses the reaction aldehydo-D-ribose 5-phosphate + D-glyceraldehyde 3-phosphate + L-glutamine = pyridoxal 5'-phosphate + L-glutamate + phosphate + 3 H2O + H(+). The enzyme catalyses L-glutamine + H2O = L-glutamate + NH4(+). It functions in the pathway cofactor biosynthesis; pyridoxal 5'-phosphate biosynthesis. Catalyzes the hydrolysis of glutamine to glutamate and ammonia as part of the biosynthesis of pyridoxal 5'-phosphate. The resulting ammonia molecule is channeled to the active site of PdxS. This chain is Pyridoxal 5'-phosphate synthase subunit PdxT, found in Thermotoga neapolitana (strain ATCC 49049 / DSM 4359 / NBRC 107923 / NS-E).